The chain runs to 822 residues: Ras GTPase-activating-like protein rgaA (822 aa).

The tract at residues 1 to 36 (MNKEEYSDISDSESEEVHETNNHNEHEHEEEDDTPE) is disordered. Positions 15–27 (EEVHETNNHNEHE) are enriched in basic and acidic residues. Residues 104-152 (EDKESDWIAEIQELKRNLVSEVRRNHTLERDLNRLDKRIALLIKNRGNI) adopt a coiled-coil conformation. The segment at 161-822 (GLKAPKHKGD…IHLLNKLFLY (662 aa)) is required for interaction to rac1A. Positions 234–477 (FLLLSLYRLS…GDIKNYLQEI (244 aa)) constitute a Ras-GAP domain.

In terms of assembly, heterotetramer. Quaternary complex with activated rac1A, ctxA and ctxB. Interacts directly with rac1A and ctxA. Preferentially interacts with activated forms of rac1A, rac1B and rac1C. Interacts with racE.

The protein resides in the cytoplasm. It is found in the cell cortex. Its subcellular location is the cleavage furrow. Functionally, part of signaling pathway that is required for completion of cytokinesis. gapA and rgaA control cortexillin localization to the cleavage furrow and hence may be involved in cleavage of the midbody in the final stage of cytokinesis by regulating the actin cytoskeleton. Forms a complex by linking activated rac1A to ctxA. Assembly of this complex is necessary for the recruitment of cortexillin to the midzone of a dividing cell. Overexpression leads to the suppression of the formation of cellular projections containing F-actin and to a defect in cytokinesis. The chain is Ras GTPase-activating-like protein rgaA (rgaA) from Dictyostelium discoideum (Social amoeba).